The sequence spans 338 residues: Ketol-acid reductoisomerase (NADP(+)) (338 aa).

The region spanning 1 to 181 (MKVFYDKDAD…GGGRAGIIET (181 aa)) is the KARI N-terminal Rossmann domain. NADP(+) contacts are provided by residues 24 to 27 (YGSQ), Arg47, and Ser52. Residue His107 is part of the active site. Residue Gly133 coordinates NADP(+). Positions 182–327 (NFREETETDL…EKLRAMMPWI (146 aa)) constitute a KARI C-terminal knotted domain. 4 residues coordinate Mg(2+): Asp190, Glu194, Glu226, and Glu230. Ser251 is a binding site for substrate.

Belongs to the ketol-acid reductoisomerase family. Mg(2+) is required as a cofactor.

It catalyses the reaction (2R)-2,3-dihydroxy-3-methylbutanoate + NADP(+) = (2S)-2-acetolactate + NADPH + H(+). The enzyme catalyses (2R,3R)-2,3-dihydroxy-3-methylpentanoate + NADP(+) = (S)-2-ethyl-2-hydroxy-3-oxobutanoate + NADPH + H(+). It participates in amino-acid biosynthesis; L-isoleucine biosynthesis; L-isoleucine from 2-oxobutanoate: step 2/4. Its pathway is amino-acid biosynthesis; L-valine biosynthesis; L-valine from pyruvate: step 2/4. Its function is as follows. Involved in the biosynthesis of branched-chain amino acids (BCAA). Catalyzes an alkyl-migration followed by a ketol-acid reduction of (S)-2-acetolactate (S2AL) to yield (R)-2,3-dihydroxy-isovalerate. In the isomerase reaction, S2AL is rearranged via a Mg-dependent methyl migration to produce 3-hydroxy-3-methyl-2-ketobutyrate (HMKB). In the reductase reaction, this 2-ketoacid undergoes a metal-dependent reduction by NADPH to yield (R)-2,3-dihydroxy-isovalerate. This Cupriavidus pinatubonensis (strain JMP 134 / LMG 1197) (Cupriavidus necator (strain JMP 134)) protein is Ketol-acid reductoisomerase (NADP(+)).